A 405-amino-acid chain; its full sequence is Phosphopentomutase (405 aa).

6 residues coordinate Mn(2+): D10, D305, H310, D346, H347, and H358.

Belongs to the phosphopentomutase family. It depends on Mn(2+) as a cofactor.

It localises to the cytoplasm. The catalysed reaction is 2-deoxy-alpha-D-ribose 1-phosphate = 2-deoxy-D-ribose 5-phosphate. The enzyme catalyses alpha-D-ribose 1-phosphate = D-ribose 5-phosphate. The protein operates within carbohydrate degradation; 2-deoxy-D-ribose 1-phosphate degradation; D-glyceraldehyde 3-phosphate and acetaldehyde from 2-deoxy-alpha-D-ribose 1-phosphate: step 1/2. Functionally, isomerase that catalyzes the conversion of deoxy-ribose 1-phosphate (dRib-1-P) and ribose 1-phosphate (Rib-1-P) to deoxy-ribose 5-phosphate (dRib-5-P) and ribose 5-phosphate (Rib-5-P), respectively. The protein is Phosphopentomutase of Methylorubrum extorquens (strain CM4 / NCIMB 13688) (Methylobacterium extorquens).